The primary structure comprises 158 residues: 2-amino-4-hydroxy-6-hydroxymethyldihydropteridine pyrophosphokinase (158 aa).

Belongs to the HPPK family.

The catalysed reaction is 6-hydroxymethyl-7,8-dihydropterin + ATP = (7,8-dihydropterin-6-yl)methyl diphosphate + AMP + H(+). Its pathway is cofactor biosynthesis; tetrahydrofolate biosynthesis; 2-amino-4-hydroxy-6-hydroxymethyl-7,8-dihydropteridine diphosphate from 7,8-dihydroneopterin triphosphate: step 4/4. Catalyzes the transfer of pyrophosphate from adenosine triphosphate (ATP) to 6-hydroxymethyl-7,8-dihydropterin, an enzymatic step in folate biosynthesis pathway. This is 2-amino-4-hydroxy-6-hydroxymethyldihydropteridine pyrophosphokinase (folK) from Methylorubrum extorquens (strain ATCC 14718 / DSM 1338 / JCM 2805 / NCIMB 9133 / AM1) (Methylobacterium extorquens).